A 574-amino-acid chain; its full sequence is MIDRSILNNIPKKPGVYIFKNNKGDPIYIGKAKNLKNRVSSYFNKKNYIGNEKTYEMLEKATNLDYIITSNENQAFILEANLIYIHKPKYNIMLKDTRVYPYILVTDEQFPKIKYIRTKKEEKGKFYGPYSDVKFVKDVIEVLQSVYKIRSCDRDLGRKSKPCFLYHLGRCYGPCYKDVDETVYQESVEKVKKVLSGDIEEVKNYLQKAMMDYAKIKNYEKAAQMRDTLFKLENLFEEVAVEYKNGKNLDIIMYEPPVYLVLIVRKGYLISKLSFTMEGTLEDFLYQYYIVRKNEPPSLISTLYNEEISPEILDFLKEKGLKRIEKIGKSSKIYEMAYTNLQEEIKRQKDLSFALKQAKEILSLKKEPKIIEGIDISHLQGLYTVASLVRFENGKPKKEGYRKYRLDDIKAPDDFESIRTVIKRRYQKHELPDLLFIDGGKGQVNSAVEALKEIGYSLKDVDVVGIAKEDERIVFPGDIPDLHLPLDHPVLRLLIYVRDETHRFAIGFNRSLRSKRFEKTKLDDIYGIGPKRKKELIKHFGGIQKLLEASIEEISKVVKSEKIAKRIKESLGEK.

The 81-residue stretch at 12-92 (KKPGVYIFKN…IYIHKPKYNI (81 aa)) folds into the GIY-YIG domain. Positions 200 to 235 (EEVKNYLQKAMMDYAKIKNYEKAAQMRDTLFKLENL) constitute a UVR domain.

It belongs to the UvrC family. Interacts with UvrB in an incision complex.

The protein localises to the cytoplasm. The UvrABC repair system catalyzes the recognition and processing of DNA lesions. UvrC both incises the 5' and 3' sides of the lesion. The N-terminal half is responsible for the 3' incision and the C-terminal half is responsible for the 5' incision. This Petrotoga mobilis (strain DSM 10674 / SJ95) protein is UvrABC system protein C.